The following is a 33-amino-acid chain: Photosystem II reaction center protein Psb30 (33 aa).

The chain crosses the membrane as a helical span at residues 7-27; that stretch reads IQLGSLTLITLTGPLIIGIIF.

It belongs to the Psb30/Ycf12 family. In terms of assembly, PSII is composed of 1 copy each of membrane proteins PsbA, PsbB, PsbC, PsbD, PsbE, PsbF, PsbH, PsbI, PsbJ, PsbK, PsbL, PsbM, PsbT, PsbY, PsbZ, Psb30/Ycf12, peripheral proteins of the oxygen-evolving complex and a large number of cofactors. It forms dimeric complexes.

The protein localises to the plastid. Its subcellular location is the chloroplast thylakoid membrane. A core subunit of photosystem II (PSII), probably helps stabilize the reaction center. This chain is Photosystem II reaction center protein Psb30, found in Euglena gracilis.